The chain runs to 311 residues: Malate dehydrogenase (311 aa).

NAD(+) contacts are provided by residues 7-13 (GAAGGIG) and aspartate 34. Substrate contacts are provided by arginine 81 and arginine 87. Residues asparagine 94 and 117–119 (ITN) contribute to the NAD(+) site. Substrate contacts are provided by asparagine 119 and arginine 153. Histidine 177 serves as the catalytic Proton acceptor. Residue methionine 227 participates in NAD(+) binding.

This sequence belongs to the LDH/MDH superfamily. MDH type 1 family. Homodimer.

The enzyme catalyses (S)-malate + NAD(+) = oxaloacetate + NADH + H(+). Functionally, catalyzes the reversible oxidation of malate to oxaloacetate. The protein is Malate dehydrogenase of Histophilus somni (strain 129Pt) (Haemophilus somnus).